The sequence spans 99 residues: Large ribosomal subunit protein eL36A (99 aa).

It belongs to the eukaryotic ribosomal protein eL36 family. In terms of assembly, component of the large ribosomal subunit (LSU). Mature yeast ribosomes consist of a small (40S) and a large (60S) subunit. The 40S small subunit contains 1 molecule of ribosomal RNA (18S rRNA) and at least 33 different proteins. The large 60S subunit contains 3 rRNA molecules (25S, 5.8S and 5S rRNA) and at least 46 different proteins.

The protein resides in the cytoplasm. In terms of biological role, component of the ribosome, a large ribonucleoprotein complex responsible for the synthesis of proteins in the cell. The small ribosomal subunit (SSU) binds messenger RNAs (mRNAs) and translates the encoded message by selecting cognate aminoacyl-transfer RNA (tRNA) molecules. The large subunit (LSU) contains the ribosomal catalytic site termed the peptidyl transferase center (PTC), which catalyzes the formation of peptide bonds, thereby polymerizing the amino acids delivered by tRNAs into a polypeptide chain. The nascent polypeptides leave the ribosome through a tunnel in the LSU and interact with protein factors that function in enzymatic processing, targeting, and the membrane insertion of nascent chains at the exit of the ribosomal tunnel. The sequence is that of Large ribosomal subunit protein eL36A (rpl3601) from Schizosaccharomyces pombe (strain 972 / ATCC 24843) (Fission yeast).